A 469-amino-acid chain; its full sequence is MSKQQIGVIGLAVMGKNLALNIESRGFSVSVYNRSSSKTEEFLQEAKGKNVVGTYSIEEFVQSLETPRKILLMVKAGTATDATIQSLLPHLEKDDILIDGGNTYYKDTQRRNKELAESGIHFIGTGVSGGEEGALKGPSIMPGGQKEAHELVKPILEAISAKVDGEPCTTYIGPDGAGHYVKMVHNGIEYGDMQLISESYFILKQVLGLSADELHEVFAEWNKGELDSYLIEITADIFTKKDEETGKPLVDVILDKAGQKGTGKWTSQSALDLGVPLPIITESVFARFISAMKEERVKASGLLSGPEVKPVTENKEELIEAVRKALFMSKICSYAQGFAQMKAASEEYNWDLKYGEIAMIFRGGCIIRAAFLQKIKEAYDREPELDNLLLDSYFKNIVESYQGALRQVISLAVAQGVPVPSFSSALAYYDSYRTAVLPANLIQAQRDYFGAHTYERTDKEGIFHTEWMK.

NADP(+)-binding positions include 10-15 (GLAVMG), 33-35 (NRS), 74-76 (VKA), and Asn102. Residues Asn102 and 128-130 (SGG) each bind substrate. Lys182 acts as the Proton acceptor in catalysis. 185 to 186 (HN) is a substrate binding site. Glu189 functions as the Proton donor in the catalytic mechanism. Residues Tyr190, Lys260, Arg287, Arg446, and His452 each contribute to the substrate site.

It belongs to the 6-phosphogluconate dehydrogenase family. As to quaternary structure, homodimer.

The enzyme catalyses 6-phospho-D-gluconate + NADP(+) = D-ribulose 5-phosphate + CO2 + NADPH. It participates in carbohydrate degradation; pentose phosphate pathway; D-ribulose 5-phosphate from D-glucose 6-phosphate (oxidative stage): step 3/3. Functionally, catalyzes the oxidative decarboxylation of 6-phosphogluconate to ribulose 5-phosphate and CO(2), with concomitant reduction of NADP to NADPH. Is the predominant 6-P-gluconate dehydrogenase isoenzyme in B.subtilis during growth on glucose and gluconate. The chain is 6-phosphogluconate dehydrogenase, NADP(+)-dependent, decarboxylating (gndA) from Bacillus subtilis (strain 168).